A 354-amino-acid chain; its full sequence is Fructose-bisphosphate aldolase (354 aa).

Residue serine 50 coordinates D-glyceraldehyde 3-phosphate. The active-site Proton donor is the aspartate 83. Zn(2+)-binding residues include histidine 84, aspartate 105, glutamate 142, and histidine 198. Position 199 (glycine 199) interacts with dihydroxyacetone phosphate. Residue histidine 232 coordinates Zn(2+). Dihydroxyacetone phosphate is bound by residues 233–235 (GSS) and 275–278 (NIDT).

Belongs to the class II fructose-bisphosphate aldolase family. In terms of assembly, homodimer. Zn(2+) is required as a cofactor.

It catalyses the reaction beta-D-fructose 1,6-bisphosphate = D-glyceraldehyde 3-phosphate + dihydroxyacetone phosphate. Its pathway is carbohydrate biosynthesis; Calvin cycle. The protein operates within carbohydrate degradation; glycolysis; D-glyceraldehyde 3-phosphate and glycerone phosphate from D-glucose: step 4/4. Activity is stimulated by Fe(2+) in autotrophically grown cells. Catalyzes the aldol condensation of dihydroxyacetone phosphate (DHAP or glycerone-phosphate) with glyceraldehyde 3-phosphate (G3P) to form fructose 1,6-bisphosphate (FBP) in gluconeogenesis and the reverse reaction in glycolysis. In Xanthobacter flavus, this protein is Fructose-bisphosphate aldolase.